A 130-amino-acid chain; its full sequence is MSNVPAELKYTTSHEWVLHEGGGIYSVGITEHAQELLGDMVFIDLPEVGTVVAAGDDCAVAESVKAASDIYAPISGEIVEVNDDLESSPELVNSAPYADGWLFRIRISDESDLDELLDAEGYQASLEEDE.

The region spanning 24 to 106 (IYSVGITEHA…YADGWLFRIR (83 aa)) is the Lipoyl-binding domain. Position 65 is an N6-lipoyllysine (lysine 65).

The protein belongs to the GcvH family. In terms of assembly, the glycine cleavage system is composed of four proteins: P, T, L and H. (R)-lipoate serves as cofactor.

The glycine cleavage system catalyzes the degradation of glycine. The H protein shuttles the methylamine group of glycine from the P protein to the T protein. The chain is Glycine cleavage system H protein from Pectobacterium carotovorum subsp. carotovorum (strain PC1).